Reading from the N-terminus, the 494-residue chain is 4-trimethylaminobutyraldehyde dehydrogenase (494 aa).

S2 is subject to N-acetylserine. K30 is subject to N6-acetyllysine; alternate. K30 carries the post-translational modification N6-succinyllysine; alternate. K59 carries the post-translational modification N6-succinyllysine. Residues K180 and 232–236 (GSVPT) each bind NAD(+). E254 acts as the Proton acceptor in catalysis. Residue C288 is the Nucleophile of the active site. 2 positions are modified to N6-acetyllysine: K298 and K344. E391 provides a ligand contact to NAD(+).

The protein belongs to the aldehyde dehydrogenase family. As to quaternary structure, homotetramer.

It localises to the cytoplasm. The protein resides in the cytosol. It carries out the reaction 4-(trimethylamino)butanal + NAD(+) + H2O = 4-(trimethylamino)butanoate + NADH + 2 H(+). It catalyses the reaction an aldehyde + NAD(+) + H2O = a carboxylate + NADH + 2 H(+). The enzyme catalyses 4-aminobutanal + NAD(+) + H2O = 4-aminobutanoate + NADH + 2 H(+). The catalysed reaction is formaldehyde + NAD(+) + H2O = formate + NADH + 2 H(+). It carries out the reaction acetaldehyde + NAD(+) + H2O = acetate + NADH + 2 H(+). It catalyses the reaction imidazole-4-acetaldehyde + NAD(+) + H2O = imidazole-4-acetate + NADH + 2 H(+). The enzyme catalyses acrolein + NAD(+) + H2O = acrylate + NADH + 2 H(+). The catalysed reaction is (5-hydroxyindol-3-yl)acetaldehyde + NAD(+) + H2O = (5-hydroxyindol-3-yl)acetate + NADH + 2 H(+). It carries out the reaction 3,4-dihydroxyphenylacetaldehyde + NAD(+) + H2O = 3,4-dihydroxyphenylacetate + NADH + 2 H(+). It catalyses the reaction spermine monoaldehyde + NAD(+) + H2O = N-(2-carboxyethyl)spermidine + NADH + 2 H(+). The enzyme catalyses propanal + NAD(+) + H2O = propanoate + NADH + 2 H(+). The catalysed reaction is butanal + NAD(+) + H2O = butanoate + NADH + 2 H(+). It carries out the reaction pentanal + NAD(+) + H2O = pentanoate + NADH + 2 H(+). It catalyses the reaction hexanal + NAD(+) + H2O = hexanoate + NADH + 2 H(+). The protein operates within amine and polyamine biosynthesis; carnitine biosynthesis. Its function is as follows. Converts gamma-trimethylaminobutyraldehyde into gamma-butyrobetaine with high efficiency (in vitro). Can catalyze the irreversible oxidation of a broad range of aldehydes to the corresponding acids in an NAD-dependent reaction, but with low efficiency. Catalyzes the oxidation of aldehydes arising from biogenic amines and polyamines. The protein is 4-trimethylaminobutyraldehyde dehydrogenase (ALDH9A1) of Bos taurus (Bovine).